We begin with the raw amino-acid sequence, 218 residues long: MGGGWALGDLVPDIQADSTMGHIKVRDYCKDGWTIIFSHPGDYPPVCTTELGKIAAYNPEFEKRGVKLLGLSTDTVEDHQGWIKDIESYTPDAPVLYPILADPDRKITVALNMMDPDEKDANGKPLASRALHIIGPDCRLKLSLLYPGTTGRNFDEVLRVLDSLQLASKHKIATPANWQKGEPVVISPSVSDEKAKQMFPQGWETVNLPKALRMTFVD.

The 162-residue stretch at 5 to 166 folds into the Thioredoxin domain; it reads WALGDLVPDI…VLRVLDSLQL (162 aa). C47 acts as the Cysteine sulfenic acid (-SOH) intermediate in catalysis.

It belongs to the peroxiredoxin family. Prx6 subfamily.

The protein localises to the nucleus. It is found in the cytoplasm. The enzyme catalyses a hydroperoxide + [thioredoxin]-dithiol = an alcohol + [thioredoxin]-disulfide + H2O. In terms of biological role, thiol-specific peroxidase that catalyzes the reduction of hydrogen peroxide and organic hydroperoxides to water and alcohols, respectively. Seems to contribute to the inhibition of germination during stress. Associated with the rehydration events involved in the recovery of the desiccation-tolerant moss. The polypeptide is Probable 1-Cys peroxiredoxin (Syntrichia ruralis (Great hairy screw-moss)).